The sequence spans 440 residues: Adenosylhomocysteinase (440 aa).

Residues threonine 47, aspartate 123, and glutamate 148 each coordinate substrate. An NAD(+)-binding site is contributed by 149 to 151 (TTT). Substrate-binding residues include lysine 178 and aspartate 182. Residues asparagine 183, 228-233 (GFGDVG), glutamate 251, 307-309 (IGH), and asparagine 354 contribute to the NAD(+) site.

The protein belongs to the adenosylhomocysteinase family. NAD(+) serves as cofactor.

The catalysed reaction is S-adenosyl-L-homocysteine + H2O = L-homocysteine + adenosine. Its pathway is amino-acid biosynthesis; L-homocysteine biosynthesis; L-homocysteine from S-adenosyl-L-homocysteine: step 1/1. Its function is as follows. Adenosylhomocysteine is a competitive inhibitor of S-adenosyl-L-methionine-dependent methyl transferase reactions; therefore adenosylhomocysteinase may play a key role in the control of methylations via regulation of the intracellular concentration of adenosylhomocysteine. This Pneumocystis carinii protein is Adenosylhomocysteinase (SAHH).